Here is a 131-residue protein sequence, read N- to C-terminus: Small ribosomal subunit protein uS8 (131 aa).

It belongs to the universal ribosomal protein uS8 family. Part of the 30S ribosomal subunit. Contacts proteins S5 and S12.

Functionally, one of the primary rRNA binding proteins, it binds directly to 16S rRNA central domain where it helps coordinate assembly of the platform of the 30S subunit. The protein is Small ribosomal subunit protein uS8 of Campylobacter jejuni (strain RM1221).